Reading from the N-terminus, the 908-residue chain is Mycobactin import ATP-binding/permease protein IrtA (908 aa).

The Cytoplasmic segment spans residues 1–329 (MARGFQGVML…SRLLAPLKKP (329 aa)). The 110-residue stretch at 15–124 (ARDHQATVVD…MGSRGFSVPE (110 aa)) folds into the FAD-binding FR-type domain. The tract at residues 16 to 245 (RDHQATVVDK…AQAYWTEGRA (230 aa)) is siderophore interaction domain. Residues 70–73 (RAYT), 87–91 (DMVLH), 97–98 (AS), and 241–243 (TEG) contribute to the FAD site. A disordered region spans residues 245–311 (AMGSSRGETS…GAAQPRTPVR (67 aa)). Low complexity predominate over residues 253–309 (TSTPAKPAAKTAPAKAAAKPAAASGAGTPEHAAAPAAATTGAPQAAPAPGAAQPRTP). The chain crosses the membrane as a helical span at residues 330–350 (LIVSGVLQALITLIELAPFVL). An ABC transmembrane type-1 domain is found at 331–613 (IVSGVLQALI…IGYGLSGIQT (283 aa)). Topologically, residues 351–371 (LVELARLLLGGAEAERLWTLG) are periplasmic. The helical transmembrane segment at 372 to 392 (LTAVSLIGLGAVLAAAMTLWL) threads the bilayer. Residues 393–444 (HRVDARFAHELRGRLLTKLSRLPLGWFTRRGSASTKQLVQDDTLALHYLITH) are Cytoplasmic-facing. The chain crosses the membrane as a helical span at residues 445 to 465 (AIPDAVAAVVAPVAVLVYLFV). The Periplasmic portion of the chain corresponds to 466-469 (ADWR). Residues 470-490 (VALVLFIPVLVYLVLMSVMTI) traverse the membrane as a helical segment. The Cytoplasmic segment spans residues 491-557 (QSGSKIAQAP…PFVGKKTLMD (67 aa)). A helical transmembrane segment spans residues 558-578 (LVTRPATFLWIILVAGVPLVV). Topologically, residues 579–586 (TGRMDPVN) are periplasmic. The helical transmembrane segment at 587-607 (LLPFLLLGTTFGARLLGIGYG) threads the bilayer. Residues 608–908 (LSGIQTGMLA…VSADAVEVGR (301 aa)) are Cytoplasmic-facing. The ABC transporter domain occupies 654 to 887 (VELDRVSFEY…GGRYRGLWDS (234 aa)). Position 687–694 (687–694 (GPSGSGKS)) interacts with ATP.

Belongs to the ABC transporter superfamily. Siderophore-Fe(3+) uptake transporter (SIUT) (TC 3.A.1.21) family. In terms of assembly, forms a heterodimer with IrtB. The cofactor is FAD.

It is found in the cell inner membrane. Its activity is regulated as follows. The ATPase activity of IrtAB is stimulated more than 38-fold in the presence of Fe-MBT, and more than 10-fold in the presence of Fe-cMBT. In terms of biological role, part of the ABC transporter complex IrtAB involved in the import of iron-bound mycobactin (Fe-MBT) and carboxymycobactin (Fe-cMBT). Has a preference for Fe-MBT over Fe-cMBT. Mycobactins are then reduced by the siderophore interaction domain to facilitate iron release in the bacterial cell. Transmembrane domains (TMD) form a pore in the membrane and the ATP-binding domain (NBD) is responsible for energy generation. This chain is Mycobactin import ATP-binding/permease protein IrtA, found in Mycolicibacterium thermoresistibile (strain ATCC 19527 / DSM 44167 / CIP 105390 / JCM 6362 / NCTC 10409 / 316) (Mycobacterium thermoresistibile).